The chain runs to 714 residues: G protein-coupled receptor kinase 2 (714 aa).

The tract at residues 1–308 (MELENIVANT…LEAQPITYKT (308 aa)) is N-terminal. 2 consecutive RGS domains span residues 53 to 174 (YGYV…SQHS) and 177 to 294 (INHK…HRYL). A disordered region spans residues 141-229 (SNANPTETAE…GGGEGGGGGK (89 aa)). Low complexity predominate over residues 154-175 (CNNTTANNCNNINNSNNSQHSS). 2 stretches are compositionally biased toward basic and acidic residues: residues 176–190 (DINH…HNGD) and 199–220 (HQDD…EKGG). Residues 309 to 574 (FRMYRVLGKG…GQDVMAHPFF (266 aa)) form the Protein kinase domain. ATP is bound by residues 315-323 (LGKGGFGEV) and Lys-338. Asp-435 (proton acceptor) is an active-site residue. The AGC-kinase C-terminal domain occupies 577-642 (TQLNWRRLEA…GSVSISWQNE (66 aa)). Ser-612 is subject to Phosphoserine. Residue Thr-613 is modified to Phosphothreonine. The tract at residues 667–714 (INAAPEPDKAGCFPFRRKKKQPARTQPIPIPEHLLTTSHSVSSTTVES) is disordered. Residues 698-714 (EHLLTTSHSVSSTTVES) are compositionally biased toward low complexity.

This sequence belongs to the protein kinase superfamily. AGC Ser/Thr protein kinase family. GPRK subfamily. Expressed in all larval tissues and in adult ovaries. Larval CNS staining is localized to axons projecting to the optic lobes and the mushroom bodies, in the longitudinal connectives, and in cell bodies and nerves of the ring gland corpus allatum. Adult CNS staining is detectable only in cell bodies and processes associated with the ellipsoid body of the central complex and portions of the mushroom bodies. In the wing disk, expression is confined to a stripe that parallels the anterior/posterior boundary of the wing blade and the hinge region, and weak expression in the prospective notum.

Its subcellular location is the membrane. The enzyme catalyses [G-protein-coupled receptor] + ATP = [G-protein-coupled receptor]-phosphate + ADP + H(+). In terms of biological role, specifically phosphorylates the activated forms of G protein-coupled receptors. Required during oogenesis and embryogenesis; component of a signaling pathway that functions during egg chamber maturation. This chain is G protein-coupled receptor kinase 2 (Gprk2), found in Drosophila melanogaster (Fruit fly).